A 66-amino-acid polypeptide reads, in one-letter code: Cadmium-metallothionein (66 aa).

Serine 1 carries the N-acetylserine modification. Residues cysteine 9, cysteine 13, cysteine 18, cysteine 20, cysteine 24, cysteine 26, cysteine 30, cysteine 32, cysteine 35, cysteine 38, cysteine 40, cysteine 45, cysteine 47, cysteine 51, cysteine 57, cysteine 59, cysteine 63, and cysteine 65 each contribute to the Cd(2+) site.

Belongs to the metallothionein superfamily. Type 2 family.

In terms of biological role, the metallothioneins are involved in the cellular sequestration of toxic metal ions and regulation of essential trace elements. Binds almost exclusively cadmium. This is Cadmium-metallothionein from Helix pomatia (Roman snail).